Here is a 704-residue protein sequence, read N- to C-terminus: Pentatricopeptide repeat-containing protein At4g28010 (704 aa).

PPR repeat units lie at residues 71–105 (LAFAGNNLMAKLVRSRNHELAFSFYRKMLETDTFI), 106–140 (NFVSLSGLLECYVQMRKTGFAFGVLALMLKRGFAF), 141–175 (NVYNHNILLKGLCRNLECGKAVSLLREMRRNSLMP), 176–210 (DVFSYNTVIRGFCEGKELEKALELANEMKGSGCSW), 211–245 (SLVTWGILIDAFCKAGKMDEAMGFLKEMKFMGLEA), 246–280 (DLVVYTSLIRGFCDCGELDRGKALFDEVLERGDSP), 281–315 (CAITYNTLIRGFCKLGQLKEASEIFEFMIERGVRP), 316–350 (NVYTYTGLIDGLCGVGKTKEALQLLNLMIEKDEEP), 351–385 (NAVTYNIIINKLCKDGLVADAVEIVELMKKRRTRP), 386–416 (DNITYNILLGGLCAKGDLDEASKLLYLMLKD), 423–453 (DVISYNALIHGLCKENRLHQALDIYDLLVEK), 458–492 (DRVTTNILLNSTLKAGDVNKAMELWKQISDSKIVR), 493–527 (NSDTYTAMIDGFCKTGMLNVAKGLLCKMRVSELQP), 528–562 (SVFDYNCLLSSLCKEGSLDQAWRLFEEMQRDNNFP), 563–597 (DVVSFNIMIDGSLKAGDIKSAESLLVGMSRAGLSP), 598–632 (DLFTYSKLINRFLKLGYLDEAISFFDKMVDSGFEP), and 633–667 (DAHICDSVLKYCISQGETDKLTELVKKLVDKDIVL).

The protein belongs to the PPR family. P subfamily.

The chain is Pentatricopeptide repeat-containing protein At4g28010 from Arabidopsis thaliana (Mouse-ear cress).